A 101-amino-acid polypeptide reads, in one-letter code: ATP-dependent Clp protease adapter protein ClpS 1 (101 aa).

This sequence belongs to the ClpS family. Binds to the N-terminal domain of the chaperone ClpA.

Its function is as follows. Involved in the modulation of the specificity of the ClpAP-mediated ATP-dependent protein degradation. In Bradyrhizobium diazoefficiens (strain JCM 10833 / BCRC 13528 / IAM 13628 / NBRC 14792 / USDA 110), this protein is ATP-dependent Clp protease adapter protein ClpS 1.